Consider the following 462-residue polypeptide: Probable threonine/serine transporter YbxG (462 aa).

The next 12 helical transmembrane spans lie at 17–37, 38–58, 89–109, 121–141, 154–174, 190–210, 238–258, 276–296, 331–351, 355–375, 398–418, and 427–447; these read MIAL…STIS, WTGP…FFIM, ITAW…IIAV, PAWI…LISV, IKIV…FFGF, GGFF…VIAA, IIWR…TVYP, IGIT…AMSG, LYGT…NYIA, IFVY…FIIL, FAPF…VGMW, and LIVG…FGIG.

The protein belongs to the amino acid-polyamine-organocation (APC) superfamily.

The protein localises to the cell membrane. Probable threonine transporter. Is also active as a minor serine permease. This chain is Probable threonine/serine transporter YbxG (ybxG), found in Bacillus subtilis (strain 168).